The chain runs to 271 residues: Putative phosphoenolpyruvate synthase regulatory protein (271 aa).

152 to 159 (GVSRSGKT) contributes to the ADP binding site.

Belongs to the pyruvate, phosphate/water dikinase regulatory protein family. PSRP subfamily.

It catalyses the reaction [pyruvate, water dikinase] + ADP = [pyruvate, water dikinase]-phosphate + AMP + H(+). It carries out the reaction [pyruvate, water dikinase]-phosphate + phosphate + H(+) = [pyruvate, water dikinase] + diphosphate. Bifunctional serine/threonine kinase and phosphorylase involved in the regulation of the phosphoenolpyruvate synthase (PEPS) by catalyzing its phosphorylation/dephosphorylation. This Dichelobacter nodosus (strain VCS1703A) protein is Putative phosphoenolpyruvate synthase regulatory protein.